A 101-amino-acid chain; its full sequence is Enhancer of yellow 2 transcription factor (101 aa).

It belongs to the ENY2 family. As to quaternary structure, component of the nuclear pore complex (NPC)-associated TREX-2/AMEX complex (anchoring and mRNA export complex), composed of e(y)2, xmas and PCID2. Within the TREX-2/ AMEX complex, interactions with xmas is required for localization to the nuclear periphery. Component of the SAGA transcription coactivator-HAT complexes, at least composed of Ada2b, e(y)2, Pcaf/Gcn5, Taf10 and Nipped-A/Trrap. Within the SAGA complex, e(y)2, Sgf11, and not/nonstop form an additional subcomplex of SAGA called the DUB module (deubiquitination module). Component of the THO complex, composed of at least e(y)2, HPR1, THO2, THOC5, THOC6 and THOC7. Interacts with Taf9. Interacts with su(Hw) (via zinc fingers). Interacts with the nuclear pore complex (NPC). Interaction between the TREX-2/AMEX complex and the ORC complex is required for ORC localization to mRNPs, and consequently mRNA export. Within the TREX-2/AMEX-ORC complex, interacts with Orc6 and (via N-terminus or C-terminus) with Orc3. Interacts with the zinc finger protein CG9890. Ubiquitous.

It localises to the nucleus. Its subcellular location is the nucleoplasm. The protein resides in the cytoplasm. It is found in the nucleus membrane. Involved in mRNA export coupled transcription activation by association with both the TREX-2/AMEX and the SAGA complexes. The SAGA complex is a multiprotein complex that activates transcription by remodeling chromatin and mediating histone acetylation and deubiquitination. Within the SAGA complex, participates in a subcomplex that specifically deubiquitinates histone H2B. The SAGA complex is recruited to specific gene promoters by activators, where it is required for transcription. Required for nuclear receptor-mediated transactivation. Involved in transcription elongation by recruiting the THO complex onto nascent mRNA. The TREX-2/AMEX complex functions in docking export-competent ribonucleoprotein particles (mRNPs) to the nuclear entrance of the nuclear pore complex (nuclear basket). TREX-2/AMEX participates in mRNA export and accurate chromatin positioning in the nucleus by tethering genes to the nuclear periphery. Recruited to the su(Hw) insulators via its interaction with su(Hw) and participates in the barrier activity of such insulators. In contrast, it does not participate in the enhancer-blocking activity of the su(Hw) insulators. This chain is Enhancer of yellow 2 transcription factor, found in Drosophila melanogaster (Fruit fly).